The following is an 876-amino-acid chain: Alanine--tRNA ligase (876 aa).

Residues histidine 564, histidine 568, cysteine 666, and histidine 670 each contribute to the Zn(2+) site.

It belongs to the class-II aminoacyl-tRNA synthetase family. As to quaternary structure, homotetramer. Requires Zn(2+) as cofactor.

It is found in the cytoplasm. The enzyme catalyses tRNA(Ala) + L-alanine + ATP = L-alanyl-tRNA(Ala) + AMP + diphosphate. Catalyzes the attachment of alanine to tRNA(Ala) in a two-step reaction: alanine is first activated by ATP to form Ala-AMP and then transferred to the acceptor end of tRNA(Ala). Also edits incorrectly charged Ser-tRNA(Ala) and Gly-tRNA(Ala) via its editing domain. This is Alanine--tRNA ligase from Salmonella paratyphi A (strain ATCC 9150 / SARB42).